The primary structure comprises 286 residues: tRNA(Ile)-lysidine synthase (286 aa).

S7–S12 provides a ligand contact to ATP.

It belongs to the tRNA(Ile)-lysidine synthase family.

It localises to the cytoplasm. The catalysed reaction is cytidine(34) in tRNA(Ile2) + L-lysine + ATP = lysidine(34) in tRNA(Ile2) + AMP + diphosphate + H(+). Its function is as follows. Ligates lysine onto the cytidine present at position 34 of the AUA codon-specific tRNA(Ile) that contains the anticodon CAU, in an ATP-dependent manner. Cytidine is converted to lysidine, thus changing the amino acid specificity of the tRNA from methionine to isoleucine. The polypeptide is tRNA(Ile)-lysidine synthase (Mycoplasmopsis pulmonis (strain UAB CTIP) (Mycoplasma pulmonis)).